We begin with the raw amino-acid sequence, 163 residues long: Biotin carboxyl carrier protein of acetyl-CoA carboxylase (163 aa).

Residues 85 to 161 (GDFIVSPLVG…QFGSKLFRIV (77 aa)) enclose the Biotinyl-binding domain. N6-biotinyllysine is present on lysine 127.

In terms of assembly, homodimer.

It functions in the pathway lipid metabolism; fatty acid biosynthesis. Functionally, this protein is a component of the acetyl coenzyme A carboxylase complex; first, biotin carboxylase catalyzes the carboxylation of the carrier protein and then the transcarboxylase transfers the carboxyl group to form malonyl-CoA. This chain is Biotin carboxyl carrier protein of acetyl-CoA carboxylase (accB), found in Chlamydia muridarum (strain MoPn / Nigg).